The chain runs to 398 residues: NADH-quinone oxidoreductase subunit D (398 aa).

This sequence belongs to the complex I 49 kDa subunit family. NDH-1 is composed of 14 different subunits. Subunits NuoB, C, D, E, F, and G constitute the peripheral sector of the complex.

It is found in the cell inner membrane. The catalysed reaction is a quinone + NADH + 5 H(+)(in) = a quinol + NAD(+) + 4 H(+)(out). In terms of biological role, NDH-1 shuttles electrons from NADH, via FMN and iron-sulfur (Fe-S) centers, to quinones in the respiratory chain. The immediate electron acceptor for the enzyme in this species is believed to be ubiquinone. Couples the redox reaction to proton translocation (for every two electrons transferred, four hydrogen ions are translocated across the cytoplasmic membrane), and thus conserves the redox energy in a proton gradient. This Bradyrhizobium diazoefficiens (strain JCM 10833 / BCRC 13528 / IAM 13628 / NBRC 14792 / USDA 110) protein is NADH-quinone oxidoreductase subunit D.